Consider the following 336-residue polypeptide: Anthranilate phosphoribosyltransferase (336 aa).

5-phospho-alpha-D-ribose 1-diphosphate is bound by residues Gly-79, 82-83 (GD), Thr-87, 89-92 (NIST), 107-115 (KHGNRAMSS), and Ser-119. Gly-79 contributes to the anthranilate binding site. Residue Ser-91 coordinates Mg(2+). Residue Asn-110 coordinates anthranilate. Position 165 (Arg-165) interacts with anthranilate. Mg(2+)-binding residues include Asp-225 and Glu-226.

It belongs to the anthranilate phosphoribosyltransferase family. Homodimer. Mg(2+) is required as a cofactor.

It catalyses the reaction N-(5-phospho-beta-D-ribosyl)anthranilate + diphosphate = 5-phospho-alpha-D-ribose 1-diphosphate + anthranilate. It participates in amino-acid biosynthesis; L-tryptophan biosynthesis; L-tryptophan from chorismate: step 2/5. Its function is as follows. Catalyzes the transfer of the phosphoribosyl group of 5-phosphorylribose-1-pyrophosphate (PRPP) to anthranilate to yield N-(5'-phosphoribosyl)-anthranilate (PRA). The protein is Anthranilate phosphoribosyltransferase of Dictyoglomus turgidum (strain DSM 6724 / Z-1310).